A 125-amino-acid polypeptide reads, in one-letter code: Small ribosomal subunit protein uS13 (125 aa).

Residues 92-125 are disordered; sequence RHRRGLPVRGQRTRTNARTRKGKKKTVGAQAKKK.

The protein belongs to the universal ribosomal protein uS13 family. Part of the 30S ribosomal subunit. Forms a loose heterodimer with protein S19. Forms two bridges to the 50S subunit in the 70S ribosome.

In terms of biological role, located at the top of the head of the 30S subunit, it contacts several helices of the 16S rRNA. In the 70S ribosome it contacts the 23S rRNA (bridge B1a) and protein L5 of the 50S subunit (bridge B1b), connecting the 2 subunits; these bridges are implicated in subunit movement. Contacts the tRNAs in the A and P-sites. The polypeptide is Small ribosomal subunit protein uS13 (Akkermansia muciniphila (strain ATCC BAA-835 / DSM 22959 / JCM 33894 / BCRC 81048 / CCUG 64013 / CIP 107961 / Muc)).